The sequence spans 369 residues: tRNA pseudouridine synthase D (369 aa).

Catalysis depends on Asp80, which acts as the Nucleophile. Residues 156 to 318 (GIPNWFGEQR…LKQERRALRL (163 aa)) form the TRUD domain.

The protein belongs to the pseudouridine synthase TruD family.

It carries out the reaction uridine(13) in tRNA = pseudouridine(13) in tRNA. Its function is as follows. Responsible for synthesis of pseudouridine from uracil-13 in transfer RNAs. The chain is tRNA pseudouridine synthase D from Xanthomonas euvesicatoria pv. vesicatoria (strain 85-10) (Xanthomonas campestris pv. vesicatoria).